Consider the following 223-residue polypeptide: Pyridoxine/pyridoxamine 5'-phosphate oxidase (223 aa).

Residues 9-12 and lysine 76 contribute to the substrate site; that span reads RVGY. FMN contacts are provided by residues 71 to 76, 86 to 87, lysine 93, and glutamine 115; these read RTVLCK and FT. 3 residues coordinate substrate: tyrosine 133, arginine 137, and serine 141. Residues 150-151 and tryptophan 196 contribute to the FMN site; that span reads QS. 202–204 is a binding site for substrate; the sequence is RMH. Arginine 206 lines the FMN pocket.

It belongs to the pyridoxamine 5'-phosphate oxidase family. Homodimer. FMN serves as cofactor.

The catalysed reaction is pyridoxamine 5'-phosphate + O2 + H2O = pyridoxal 5'-phosphate + H2O2 + NH4(+). The enzyme catalyses pyridoxine 5'-phosphate + O2 = pyridoxal 5'-phosphate + H2O2. It participates in cofactor metabolism; pyridoxal 5'-phosphate salvage; pyridoxal 5'-phosphate from pyridoxamine 5'-phosphate: step 1/1. It functions in the pathway cofactor metabolism; pyridoxal 5'-phosphate salvage; pyridoxal 5'-phosphate from pyridoxine 5'-phosphate: step 1/1. Its function is as follows. Catalyzes the oxidation of either pyridoxine 5'-phosphate (PNP) or pyridoxamine 5'-phosphate (PMP) into pyridoxal 5'-phosphate (PLP). This is Pyridoxine/pyridoxamine 5'-phosphate oxidase from Rhodococcus jostii (strain RHA1).